The primary structure comprises 94 residues: Protein RnfH (94 aa).

Belongs to the UPF0125 (RnfH) family.

The chain is Protein RnfH from Sodalis glossinidius (strain morsitans).